The following is an 857-amino-acid chain: Potassium channel AKT1 (857 aa).

Residues Met-1–Glu-61 lie on the Cytoplasmic side of the membrane. A helical transmembrane segment spans residues Ala-62–Leu-82. Topologically, residues Arg-83–Ser-90 are extracellular. A helical membrane pass occupies residues Ile-91 to Gly-111. Residues Tyr-112 to Ser-134 are Cytoplasmic-facing. The chain crosses the membrane as a helical span at residues Trp-135–Gln-155. At Ser-156–Gly-158 the chain is on the extracellular side. Residues Leu-159–Glu-179 form a helical; Voltage-sensor membrane-spanning segment. The Cytoplasmic segment spans residues Lys-180–Lys-193. The chain crosses the membrane as a helical span at residues Leu-194–Ala-214. The Extracellular segment spans residues Arg-215–Val-241. Positions Thr-242–Pro-261 form an intramembrane region, pore-forming. Residues Val-262–Lys-265 are Extracellular-facing. The chain crosses the membrane as a helical span at residues Glu-266–Gly-286. Residues Asn-287 to Ser-857 are Cytoplasmic-facing. Position 372–493 (Leu-372–Lys-493) interacts with a nucleoside 3',5'-cyclic phosphate. ANK repeat units lie at residues Lys-515–Glu-546, Asn-550–Cys-579, Glu-583–Ala-612, Asp-614–Arg-643, Thr-647–Lys-676, and His-680–Val-709. The region spanning Arg-790–Ser-857 is the KHA domain.

This sequence belongs to the potassium channel family. Plant (TC 1.A.1.4) subfamily. As to quaternary structure, the potassium channel is probably composed of a homo- or heterotetrameric complex of pore-forming subunits. Possible heteromultimer with AKT2 or KAT3. Part of a K(+)-channel calcium-sensing kinase/phosphatase complex composed by a calcium sensor CBL (CBL1, CBL2, CBL3 or CBL9), a kinase CIPK (CIPK6, CIPK16 or CIPK23), a phosphatase PP2C (AIP1) and a K(+)-channel (AKT1). Interacts directly with AIP1, CBL10, CIPK6, CIPK16 and CIPK23. Post-translationally, phosphorylated by CIPK proteins CIPK6, CIPK16 and CIPK23. The activation by phosphorylation is induced by low K(+) conditions and stimulates K(+) uptake and relocation. Dephosphorylation by AIP1 repressed the transport activity. Preferentially expressed in the peripheral cell layers of root mature including root cortex and root hairs. Detected also, at a lower level, in the mesophyll of the leaves and at restricted sites corresponding to hydathodes and guard cells.

It is found in the cell membrane. Functionally, highly selective inward-rectifying potassium channel that mediate potassium uptake by plant roots in response to low K(+) conditions, by a calcium-, CBL-, and CIPK-dependent pathway. Positively regulated by phosphorylation by CIPK23. Negatively regulated by a kinase-independent regulatory mechanism involving a competing direct binding of CBL10. Involved in the stomatal regulation by monitoring the turgor pressure in guard cells. Assuming opened or closed conformations in response to the voltage difference across the membrane, the channel is activated by hyperpolarization. May interact with the cytoskeleton or with regulatory proteins. Is essential with POT5/HAK5 for high-affinity potassium uptake in roots during seedling establishment and postgermination growth under low potassium conditions. This chain is Potassium channel AKT1 (AKT1), found in Arabidopsis thaliana (Mouse-ear cress).